The following is a 285-amino-acid chain: Protease HtpX homolog (285 aa).

2 helical membrane passes run 7 to 27 (TAML…MIGG) and 30 to 50 (GMTI…WFSD). A Zn(2+)-binding site is contributed by His-131. Glu-132 is a catalytic residue. His-135 lines the Zn(2+) pocket. The next 2 helical transmembrane spans lie at 146–166 (ITAT…FFGG) and 177–197 (IAGI…QMAI). Position 202 (Glu-202) interacts with Zn(2+).

This sequence belongs to the peptidase M48B family. It depends on Zn(2+) as a cofactor.

The protein localises to the cell inner membrane. In Burkholderia multivorans (strain ATCC 17616 / 249), this protein is Protease HtpX homolog.